We begin with the raw amino-acid sequence, 102 residues long: Feather keratin (102 aa).

Ser-1 carries the post-translational modification N-acetylserine.

It belongs to the avian keratin family. In terms of assembly, the avian keratins (F-ker, S-ker, C-ker and B-ker) are a complex mixture of very similar polypeptides.

In Dromaius novaehollandiae (Emu), this protein is Feather keratin.